Here is a 114-residue protein sequence, read N- to C-terminus: U-myrmeciitoxin(01)-Mg8a (114 aa).

Residues 1–20 (MKLSTLLVAFVLLVITVILS) form the signal peptide. Residues 21–44 (TPSTNAKALAESNALAVAVSEAEP) constitute a propeptide that is removed on maturation.

Belongs to the formicidae venom precursor-01 superfamily. As to expression, expressed by the venom gland.

The protein localises to the secreted. May have antimicrobial properties, like most ant linear peptides. The sequence is that of U-myrmeciitoxin(01)-Mg8a from Myrmecia gulosa (Red bulldog ant).